A 207-amino-acid polypeptide reads, in one-letter code: Phosphoribosylglycinamide formyltransferase (207 aa).

13–15 (GSN) is a N(1)-(5-phospho-beta-D-ribosyl)glycinamide binding site. (6R)-10-formyltetrahydrofolate-binding positions include 100–103 (MHIL) and N120. H122 serves as the catalytic Proton donor. D162 provides a ligand contact to (6R)-10-formyltetrahydrofolate. E191 contacts N(1)-(5-phospho-beta-D-ribosyl)glycinamide.

The protein belongs to the GART family.

It catalyses the reaction N(1)-(5-phospho-beta-D-ribosyl)glycinamide + (6R)-10-formyltetrahydrofolate = N(2)-formyl-N(1)-(5-phospho-beta-D-ribosyl)glycinamide + (6S)-5,6,7,8-tetrahydrofolate + H(+). Its pathway is purine metabolism; IMP biosynthesis via de novo pathway; N(2)-formyl-N(1)-(5-phospho-D-ribosyl)glycinamide from N(1)-(5-phospho-D-ribosyl)glycinamide (10-formyl THF route): step 1/1. This chain is Phosphoribosylglycinamide formyltransferase (ade5), found in Schizosaccharomyces pombe (strain 972 / ATCC 24843) (Fission yeast).